Consider the following 264-residue polypeptide: Late embryogenesis abundant protein D-34 (264 aa).

The segment covering Met-1 to Gly-16 has biased composition (low complexity). The disordered stretch occupies residues Met-1 to Lys-23. 3 SMP domains span residues Ile-22–Gln-76, Ile-138–Ala-194, and Ile-203–Asn-261.

This sequence belongs to the LEA type SMP family.

LEA proteins are late embryonic proteins abundant in higher plant seed embryos. There are two subsets of LEA proteins (5a and 5b), the first ones are expressed when the cotyledon weight reach 80 mg and the second set are expressed above 100 mg. The function of those proteins is not known. In Gossypium hirsutum (Upland cotton), this protein is Late embryogenesis abundant protein D-34.